A 129-amino-acid polypeptide reads, in one-letter code: Ig lambda-1 chain V regions MOPC 104E/RPC20/J558/S104 (129 aa).

Residues M1–S19 form the signal peptide. Q20 carries the post-translational modification Pyrrolidone carboxylic acid. An Ig-like domain is found at Q20–L125.

The sequence is that of Ig lambda-1 chain V regions MOPC 104E/RPC20/J558/S104 from Mus musculus (Mouse).